We begin with the raw amino-acid sequence, 371 residues long: MDVVEVTEGRTRFFVSRQDPHLQFPPGSGQVFYNSRMEMNRDATVLLLSVLRPESYLDAMGASGVRGLRVAHEVGIPVTINDWNAKAVDLARQNVEALGLVAEVTHGDANVLMSGRTFDAVDLDPFGTPAPFVDSAARSAGNYLFVTATDTAPLCGAHLKAGMRRYFSRPRNTEYHAEVGLRTLMGFVVREVIKYDRGVEPLFCYAHEHFHRLHLRLRYGAAAADRALARIGYVMQCPNCLYRSEQTGMLPEPEECPLCSAALVPVGPLWTGGINDDATLAAMQEALPSVTAGTGARIGRLLATCRQELDTSSHYDYHVIAKRLRVSPGRIETVIERLVALGYRASRAHYSGTALKTDAPLPVLEKVVSGG.

In terms of domain architecture, Trm1 methyltransferase spans 4 to 368 (VEVTEGRTRF…APLPVLEKVV (365 aa)). S-adenosyl-L-methionine contacts are provided by arginine 41, arginine 66, aspartate 82, aspartate 108, and alanine 109. Zn(2+) contacts are provided by cysteine 237, cysteine 240, cysteine 256, and cysteine 259.

This sequence belongs to the class I-like SAM-binding methyltransferase superfamily. Trm1 family.

The enzyme catalyses guanosine(26) in tRNA + 2 S-adenosyl-L-methionine = N(2)-dimethylguanosine(26) in tRNA + 2 S-adenosyl-L-homocysteine + 2 H(+). Its function is as follows. Dimethylates a single guanine residue at position 26 of a number of tRNAs using S-adenosyl-L-methionine as donor of the methyl groups. The chain is tRNA (guanine(26)-N(2))-dimethyltransferase from Methanoculleus marisnigri (strain ATCC 35101 / DSM 1498 / JR1).